The sequence spans 566 residues: NAD-dependent malic enzyme (566 aa).

The active-site Proton donor is the Y104. R157 provides a ligand contact to NAD(+). K175 serves as the catalytic Proton acceptor. A divalent metal cation is bound by residues E246, D247, and D270. Residues D270 and N419 each contribute to the NAD(+) site.

This sequence belongs to the malic enzymes family. In terms of assembly, homotetramer. Mg(2+) is required as a cofactor. Mn(2+) serves as cofactor.

It catalyses the reaction (S)-malate + NAD(+) = pyruvate + CO2 + NADH. The catalysed reaction is oxaloacetate + H(+) = pyruvate + CO2. This chain is NAD-dependent malic enzyme, found in Cronobacter sakazakii (strain ATCC BAA-894) (Enterobacter sakazakii).